A 104-amino-acid polypeptide reads, in one-letter code: Chitin-binding protein 2 (104 aa).

As to quaternary structure, oligomer in an unreduced state. In terms of processing, glycosylated.

Functionally, chitin-binding protein. Has antifungal activity against C.krusei, C.albicans, C.tropicalis and C.parapsilosis. Inhibits C.albicans by increasing cell membrane permeability and production of reactive oxygen species. Has no hemagglutinating activity. This chain is Chitin-binding protein 2, found in Moringa oleifera (Horseradish tree).